A 638-amino-acid polypeptide reads, in one-letter code: Bifunctional protein glk (638 aa).

The disordered stretch occupies residues 1-20 (MSTGVQTKAAPGAGQHADGP). Residues 1–341 (MSTGVQTKAA…QLSNRAGGSS (341 aa)) are glucokinase. 24 to 29 (ADIGGT) contributes to the ATP binding site. The HTH rpiR-type domain occupies 342–418 (SAVFERIRQM…LKLATGLTGT (77 aa)). A putative HTH-type transcriptional regulator region spans residues 342 to 638 (SAVFERIRQM…SHGAASSARD (297 aa)). The H-T-H motif DNA-binding region spans 378 to 397 (IVDIARKADVSQPTVIRFCR). Residues 462–601 (AIDLLNGARR…AVGVAIRRAV (140 aa)) form the SIS domain.

The protein in the N-terminal section; belongs to the bacterial glucokinase family.

It is found in the cytoplasm. It carries out the reaction D-glucose + ATP = D-glucose 6-phosphate + ADP + H(+). The sequence is that of Bifunctional protein glk (glk) from Paraburkholderia xenovorans (strain LB400).